We begin with the raw amino-acid sequence, 630 residues long: Ankyrin repeat protein OPG025 (630 aa).

ANK repeat units lie at residues 36-69, 70-100, 103-134, 174-210, 338-367, and 408-437; these read DGET…YKNI, NDFD…EINS, NGIN…PTCS, MGKT…EMCH, KHIN…VVVN, and HGRS…DINI.

The protein belongs to the orthopoxvirus OPG025 family. As to quaternary structure, interacts with components of host SCF complex CUL1 and SKP1 and components of the cullin deneddylation/COP9 signalosome complex subunits COPS7A and COPS7B.

Its function is as follows. Plays a role in the inhibition of host immune repsonse by counteracting the action of interferons on early events in the viral replication cycle. This chain is Ankyrin repeat protein OPG025 (OPG025), found in Monkeypox virus.